A 200-amino-acid chain; its full sequence is Putative manganese exporter (200 aa).

6 helical membrane passes run 13–33 (TEHVMSVLAISITTVALAEIG), 53–73 (IIAAIFLATLANHALAAWLGV), 81–101 (PDILKWVLVVSFLTMAGWILI), 110–130 (SISTRGPFVASFIAFFMAEIG), 150–170 (WVIVGTTLGMLLANVPVVLIG), and 180–200 (GLIRKVTAGLFLLMALATAFF).

Belongs to the GDT1 family.

The protein localises to the cell inner membrane. Functionally, involved in manganese homeostasis. May function as a manganese exporter. The sequence is that of Putative manganese exporter from Vibrio cholerae serotype O1 (strain ATCC 39541 / Classical Ogawa 395 / O395).